The primary structure comprises 273 residues: Putative pyruvate, phosphate dikinase regulatory protein (273 aa).

149–156 is a binding site for ADP; it reads GPSRTSKT.

The protein belongs to the pyruvate, phosphate/water dikinase regulatory protein family. PDRP subfamily.

The catalysed reaction is N(tele)-phospho-L-histidyl/L-threonyl-[pyruvate, phosphate dikinase] + ADP = N(tele)-phospho-L-histidyl/O-phospho-L-threonyl-[pyruvate, phosphate dikinase] + AMP + H(+). It catalyses the reaction N(tele)-phospho-L-histidyl/O-phospho-L-threonyl-[pyruvate, phosphate dikinase] + phosphate + H(+) = N(tele)-phospho-L-histidyl/L-threonyl-[pyruvate, phosphate dikinase] + diphosphate. Bifunctional serine/threonine kinase and phosphorylase involved in the regulation of the pyruvate, phosphate dikinase (PPDK) by catalyzing its phosphorylation/dephosphorylation. The sequence is that of Putative pyruvate, phosphate dikinase regulatory protein from Rickettsia rickettsii (strain Iowa).